The following is a 115-amino-acid chain: Large ribosomal subunit protein bL20 (115 aa).

This sequence belongs to the bacterial ribosomal protein bL20 family.

In terms of biological role, binds directly to 23S ribosomal RNA and is necessary for the in vitro assembly process of the 50S ribosomal subunit. It is not involved in the protein synthesizing functions of that subunit. The chain is Large ribosomal subunit protein bL20 from Borrelia hermsii (strain HS1 / DAH).